The chain runs to 349 residues: Phosphate acyltransferase (349 aa).

Belongs to the PlsX family. Homodimer. Probably interacts with PlsY.

The protein localises to the cytoplasm. The enzyme catalyses a fatty acyl-[ACP] + phosphate = an acyl phosphate + holo-[ACP]. The protein operates within lipid metabolism; phospholipid metabolism. Functionally, catalyzes the reversible formation of acyl-phosphate (acyl-PO(4)) from acyl-[acyl-carrier-protein] (acyl-ACP). This enzyme utilizes acyl-ACP as fatty acyl donor, but not acyl-CoA. The polypeptide is Phosphate acyltransferase (Colwellia psychrerythraea (strain 34H / ATCC BAA-681) (Vibrio psychroerythus)).